The sequence spans 339 residues: Nicotinate-nucleotide--dimethylbenzimidazole phosphoribosyltransferase (339 aa).

The active-site Proton acceptor is the Glu306.

This sequence belongs to the CobT family.

It catalyses the reaction 5,6-dimethylbenzimidazole + nicotinate beta-D-ribonucleotide = alpha-ribazole 5'-phosphate + nicotinate + H(+). The protein operates within nucleoside biosynthesis; alpha-ribazole biosynthesis; alpha-ribazole from 5,6-dimethylbenzimidazole: step 1/2. Catalyzes the synthesis of alpha-ribazole-5'-phosphate from nicotinate mononucleotide (NAMN) and 5,6-dimethylbenzimidazole (DMB). The sequence is that of Nicotinate-nucleotide--dimethylbenzimidazole phosphoribosyltransferase from Brucella canis (strain ATCC 23365 / NCTC 10854 / RM-666).